The chain runs to 306 residues: Curved DNA-binding protein (306 aa).

The 65-residue stretch at 5 to 69 (DYYAIMGVKP…QRRAEYDQMW (65 aa)) folds into the J domain.

Its subcellular location is the cytoplasm. It is found in the nucleoid. Functionally, DNA-binding protein that preferentially recognizes a curved DNA sequence. It is probably a functional analog of DnaJ; displays overlapping activities with DnaJ, but functions under different conditions, probably acting as a molecular chaperone in an adaptive response to environmental stresses other than heat shock. Lacks autonomous chaperone activity; binds native substrates and targets them for recognition by DnaK. Its activity is inhibited by the binding of CbpM. This Escherichia coli (strain SMS-3-5 / SECEC) protein is Curved DNA-binding protein.